The sequence spans 599 residues: Elongation factor 4 (599 aa).

Positions Lys4–Leu186 constitute a tr-type G domain. GTP contacts are provided by residues Asp16 to Thr21 and Asn133 to Asp136.

The protein belongs to the TRAFAC class translation factor GTPase superfamily. Classic translation factor GTPase family. LepA subfamily.

It localises to the cell membrane. It catalyses the reaction GTP + H2O = GDP + phosphate + H(+). Functionally, required for accurate and efficient protein synthesis under certain stress conditions. May act as a fidelity factor of the translation reaction, by catalyzing a one-codon backward translocation of tRNAs on improperly translocated ribosomes. Back-translocation proceeds from a post-translocation (POST) complex to a pre-translocation (PRE) complex, thus giving elongation factor G a second chance to translocate the tRNAs correctly. Binds to ribosomes in a GTP-dependent manner. This Ureaplasma parvum serovar 3 (strain ATCC 27815 / 27 / NCTC 11736) protein is Elongation factor 4.